A 643-amino-acid chain; its full sequence is Clathrin interactor 1 (643 aa).

Positions 16–149 (NVVMNYSEIE…QDDDRLREER (134 aa)) constitute an ENTH domain. Arg-29 serves as a coordination point for a 1,2-diacyl-sn-glycero-3-phospho-(1D-myo-inositol-4,5-bisphosphate). The tract at residues 52–54 (FMY) is interaction with VTI1B. Arg-67 is an a 1,2-diacyl-sn-glycero-3-phospho-(1D-myo-inositol-4,5-bisphosphate) binding site. 2 interaction with VTI1B regions span residues 94–96 (SER) and 142–153 (DDRLREERKKAK). Residues Ser-163, Ser-166, Ser-173, Ser-205, Ser-210, Ser-227, Ser-245, and Ser-299 each carry the phosphoserine modification. Positions 219–331 (FRRKDREDSP…SSGDLVDLFD (113 aa)) are disordered. Positions 222-239 (KDREDSPERCSDSDEEKK) are enriched in basic and acidic residues. Residues 300-310 (PDQNASTHTPQ) show a composition bias toward polar residues. Position 308 is a phosphothreonine (Thr-308). Over residues 311–323 (SSLKTSVPSSKSS) the composition is skewed to low complexity. Residues Ser-312 and Ser-642 each carry the phosphoserine modification.

This sequence belongs to the epsin family. As to quaternary structure, binds clathrin heavy chain and AP-2. Interacts with VTI1B. Interacts with GGA2 (via GAE domain). Interacts with AP1G1 (via GAE domain). Interacts with AP1G2 (via GAE domain).

Its subcellular location is the cytoplasm. The protein localises to the perinuclear region. It is found in the membrane. The protein resides in the cytoplasmic vesicle. It localises to the clathrin-coated vesicle. In terms of biological role, binds to membranes enriched in phosphatidylinositol 4,5-bisphosphate (PtdIns(4,5)P2). May have a role in transport via clathrin-coated vesicles from the trans-Golgi network to endosomes. Stimulates clathrin assembly. The sequence is that of Clathrin interactor 1 (CLINT1) from Bos taurus (Bovine).